Reading from the N-terminus, the 213-residue chain is MPRRAENWDEAEVGAEEAGVEEYGPEEDGGEESGAEESGPEESGPEELGAEEEMEAGRPRPVLRSVNSREPSQVIFCNRSPRVVLPVWLNFDGEPQPYPTLPPGTGRRIHSYRGHLWLFRDAGTHDGLLVNQTELFVPSLNVDGQPIFANITLPVYTLKERCLQVVRSLVKPENYRRLDIVRSLYEDLEDHPNVQKDLERLTQERIAHQRMGD.

The tract at residues 1–65 (MPRRAENWDE…AGRPRPVLRS (65 aa)) is disordered. The span at 8–54 (WDEAEVGAEEAGVEEYGPEEDGGEESGAEESGPEESGPEELGAEEEM) shows a compositional bias: acidic residues. 8 repeat units span residues 14–18 (GAEEA), 19–23 (GVEEY), 24–28 (GPEED), 29–33 (GGEES), 34–38 (GAEES), 39–43 (GPEES), 44–48 (GPEEL), and 49–53 (GAEEE). The 8 X 5 AA tandem repeats of G-[PAVG]-E-E-[DAYSLE] stretch occupies residues 14–53 (GAEEAGVEEYGPEEDGGEESGAEESGPEESGPEELGAEEE). Residues 100–155 (TLPPGTGRRIHSYRGHLWLFRDAGTHDGLLVNQTELFVPSLNVDGQPIFANITLPV) form an involved in binding to CCT complex region. The tract at residues 157-166 (TLKERCLQVV) is interaction with Elongin BC complex.

Belongs to the VHL family. In terms of assembly, component of the VCB (VHL-Elongin BC-CUL2) complex; this complex acts as a ubiquitin-ligase E3 and directs proteasome-dependent degradation of targeted proteins. Interacts with CUL2; this interaction is dependent on the integrity of the trimeric VCB complex. Interacts (via the beta domain) with HIF1A (via the NTAD domain); this interaction mediates degradation of HIF1A in normoxia and, in hypoxia, prevents ubiquitination and degradation of HIF1A by mediating hypoxia-induced translocation to the nucleus, a process which requires a hypoxia-dependent regulatory signal. Interacts with ADRB2; the interaction, in normoxia, is dependent on hydroxylation of ADRB2 and the subsequent VCB-mediated ubiquitination and degradation of ADRB2. Under hypoxia, hydroxylation, interaction with VHL, ubiquitination and subsequent degradation of ADRB2 are dramatically decreased. Interacts with RNF139, USP33 and JADE1. Found in a complex composed of LIMD1, VHL, EGLN1/PHD2, ELOB and CUL2. Isoform 1 and isoform 3 interact with LIMD1 (via LIM zinc-binding 2), AJUBA (via LIM domains) and WTIP (via LIM domains). Interacts with EPAS1. Interacts with CARD9. Interacts with DCUN1D1 independently of CUL2; this interaction engages DCUN1D1 in the VCB complex and triggers CUL2 neddylation and consequently cullin ring ligase (CRL) substrates polyubiquitylation. Interacts with ALAS1 (hydroxylated form). Interacts with IGFBP1. As to expression, expressed in the adult and fetal brain and kidney.

It is found in the cytoplasm. Its subcellular location is the cell membrane. The protein localises to the endoplasmic reticulum. It localises to the nucleus. It functions in the pathway protein modification; protein ubiquitination. Its function is as follows. Involved in the ubiquitination and subsequent proteasomal degradation via the von Hippel-Lindau ubiquitination complex. Seems to act as a target recruitment subunit in the E3 ubiquitin ligase complex and recruits hydroxylated hypoxia-inducible factor (HIF) under normoxic conditions. Involved in transcriptional repression through interaction with HIF1A, HIF1AN and histone deacetylases. Ubiquitinates, in an oxygen-responsive manner, ADRB2. Acts as a negative regulator of mTORC1 by promoting ubiquitination and degradation of RPTOR. This chain is von Hippel-Lindau disease tumor suppressor (VHL), found in Homo sapiens (Human).